The sequence spans 189 residues: Small heat shock protein 21 (189 aa).

A disordered region spans residues 26–53; the sequence is PPNFNPRKIAQGDNGKGQQVSRYGAGAG. The region spanning 77–183 is the sHSP domain; it reads KYFVGFDDNV…HEKIVNIPIS (107 aa).

The protein belongs to the small heat shock protein (HSP20) family.

Its function is as follows. Heat shock protein required for pathogenicity. Mediates thermotolerance and adaptation to oxidative stress and ethanol-induced stress. Required for invasive growth and filament formation under various filament inducing conditions. Plays a role in the capacity of damaging human-derived endothelial and oral epithelial cells during infection. Potentiates resistance to antifungal drugs, as well as resistance to killing by human neutrophils. Plays a major role in trehalose homeostasis in response to elevated temperatures. Regulates CEK1 activation by phosphorylation in response to elevated temperatures. This is Small heat shock protein 21 (HSP21) from Candida albicans (strain SC5314 / ATCC MYA-2876) (Yeast).